A 448-amino-acid polypeptide reads, in one-letter code: Putative F-box/LRR-repeat protein At5g25860 (448 aa).

The F-box domain maps to 11-58 (RDAVNCLPDEILAKILSYLPTKRAVSTSLISKRWRNLFALMIQLFESQ). LRR repeat units follow at residues 82 to 106 (QESF…SILC), 185 to 214 (FLHA…FLHD), 215 to 240 (LRGY…TVHF), 310 to 341 (TLSL…YFES), and 342 to 367 (NEKE…VLKG).

The protein is Putative F-box/LRR-repeat protein At5g25860 of Arabidopsis thaliana (Mouse-ear cress).